The primary structure comprises 164 residues: Protein SprT (164 aa).

The SprT-like domain occupies 13–156 (YQQAEAFFKR…LCKRCREILV (144 aa)). Position 69 (H69) interacts with Zn(2+). E70 is a catalytic residue. Residue H73 coordinates Zn(2+).

This sequence belongs to the SprT family. Zn(2+) is required as a cofactor.

It is found in the cytoplasm. This chain is Protein SprT, found in Pseudomonas putida (strain ATCC 700007 / DSM 6899 / JCM 31910 / BCRC 17059 / LMG 24140 / F1).